The primary structure comprises 156 residues: Ribonuclease H (156 aa).

Residues 3 to 144 (ELKQIRIYTD…CDTLAREAAE (142 aa)) enclose the RNase H type-1 domain. Positions 12, 50, 72, and 136 each coordinate Mg(2+).

It belongs to the RNase H family. As to quaternary structure, monomer. Mg(2+) serves as cofactor.

Its subcellular location is the cytoplasm. The catalysed reaction is Endonucleolytic cleavage to 5'-phosphomonoester.. Functionally, endonuclease that specifically degrades the RNA of RNA-DNA hybrids. The sequence is that of Ribonuclease H from Shewanella amazonensis (strain ATCC BAA-1098 / SB2B).